A 543-amino-acid polypeptide reads, in one-letter code: MSIFTDLNTSRKWQIDQWLSAVNSHIEKIQQYGHSVVNPTPLLADGFEIKTQSPVVWQFPDGHDAPISNFASQQNWLRLLISMSVITETEKYRHLAFCQSEYFLNRFVDENSGLFYWGGHRFINLDTLASEGPESKSMVHELKHHLPYYEFLHQVNPEKTRHFIQGFWNAHVEDWSCLDLGRHGDYARQRDPDVFLHSRHDVVTPANWPELPLTKGLTFVNAGTDLIYAAFVYARHTGDAHAAAWGKHLYRQYVLARNPETGMPVYQFSSPLQRQPVPADDNQTQSWFGDRAQRQFGPEFGAIAREANVLFRDMRPLLIDNPLAMLDILRHQPDAEILTWVIAGLKNYYQYAYDVNSNSLRPMWNNGQDMTDYCFKRDGYYGKAGTVLKPFPLEGDYLLPLVRAWLLSDDDDLHTLIVTMLSRLEKQGIHQSASPFLLLAITELAHAKQSAQWAEYAWQMAEILFKRYFHHGLFVRSEHHRYVRLDDPFPAILLTLIAACRNKWSEVPAVLTQGGYIHGDYRINGESRVIYDTEFIYPEKLIH.

This sequence belongs to the polysaccharide lyase 2 family. The cofactor is Cu cation. Requires Mn(2+) as cofactor. Ni(2+) serves as cofactor.

It is found in the cytoplasm. The enzyme catalyses [(1-&gt;4)-alpha-D-galacturonosyl](n) = 4-(4-deoxy-alpha-D-galact-4-enuronosyl)-D-galacturonate + [(1-&gt;4)-alpha-D-galacturonosyl](n-2). It participates in glycan metabolism; pectin degradation. In terms of biological role, catalyzes the formation of unsaturated digalacturonates from polygalacturonate or short oligogalacturonates. The polypeptide is Pectate disaccharide-lyase (pelW) (Dickeya dadantii (strain 3937) (Erwinia chrysanthemi (strain 3937))).